A 340-amino-acid polypeptide reads, in one-letter code: Extracellular matrix protein-binding protein emp (340 aa).

An N-terminal signal peptide occupies residues M1 to A26.

It is found in the cell surface. In terms of biological role, adhesin that binds to the host cell extracellular matrix proteins fibronectin, fibrinogen, collagen, and vitronectin. The sequence is that of Extracellular matrix protein-binding protein emp (emp) from Staphylococcus aureus (strain Mu50 / ATCC 700699).